A 77-amino-acid chain; its full sequence is Probable small nuclear ribonucleoprotein G (77 aa).

The 73-residue stretch at 4 to 76 (THPPELKKYM…VVIMEPKERI (73 aa)) folds into the Sm domain.

It belongs to the snRNP Sm proteins family. In terms of assembly, core component of the spliceosomal U1, U2, U4 and U5 small nuclear ribonucleoproteins (snRNPs), the building blocks of the spliceosome.

It localises to the cytoplasm. The protein localises to the cytosol. It is found in the nucleus. In terms of biological role, plays a role in pre-mRNA splicing as a core component of the spliceosomal U1, U2, U4 and U5 small nuclear ribonucleoproteins (snRNPs), the building blocks of the spliceosome. The sequence is that of Probable small nuclear ribonucleoprotein G (snr-7) from Caenorhabditis elegans.